Consider the following 222-residue polypeptide: Prolactin-3B1 (222 aa).

Positions 1–31 (MKLSLSQPCSFSGALLLLAVSNLLVWEKVTS) are cleaved as a signal peptide. 2 disulfides stabilise this stretch: cysteine 82-cysteine 197 and cysteine 214-cysteine 222.

It belongs to the somatotropin/prolactin family.

Its subcellular location is the secreted. This chain is Prolactin-3B1 (Prl3b1), found in Mus musculus (Mouse).